The primary structure comprises 261 residues: Yop proteins translocation protein T (261 aa).

7 helical membrane passes run 20–40 (FMAC…GVLL), 44–64 (IVCS…YIEV), 77–97 (IILG…LESA), 131–151 (TLIT…ALFH), 180–200 (ILLI…LAEF), 214–234 (VFVL…VIYC), and 239–259 (SHAS…IPVL).

Belongs to the FliR/MopE/SpaR family.

The protein resides in the cell membrane. Functionally, component of the yop secretion machinery. The polypeptide is Yop proteins translocation protein T (yscT) (Yersinia pestis).